Reading from the N-terminus, the 477-residue chain is Delayed-rectifier potassium channel regulatory subunit KCNS2 (477 aa).

Over 1–184 (MTGQSLWDVS…LALDNPGYSV (184 aa)) the chain is Cytoplasmic. Residues 185 to 206 (LSRVFSILSILVVMGSIITMCL) traverse the membrane as a helical segment. The Extracellular portion of the chain corresponds to 207-225 (NSLPDFQIPDSQGNPGEDP). Residues 226–248 (RFEIVEHFGIAWFTFELVARFAV) traverse the membrane as a helical segment. The Cytoplasmic segment spans residues 249–259 (APDFLKFFKNA). A helical membrane pass occupies residues 260–280 (LNLIDLMSIVPFYITLVVNLV). Residues 281–290 (VESTPTLANL) are Extracellular-facing. A helical; Voltage-sensor transmembrane segment spans residues 291 to 311 (GRVAQVLRLMRIFRILKLARH). The Cytoplasmic portion of the chain corresponds to 312–326 (STGLRSLGATLKYSY). The chain crosses the membrane as a helical span at residues 327-348 (KEVGLLLLYLSVGISIFSVVAY). The Extracellular segment spans residues 349 to 361 (TIEKEENEGLATI). Residues 362-373 (PACWWWATVSMT) constitute an intramembrane region (helical). The short motif at 374 to 379 (TVGYGD) is the Selectivity filter element. Residues 374–381 (TVGYGDVV) lie within the membrane without spanning it. The Extracellular segment spans residues 382-388 (PGTTAGK). A helical membrane pass occupies residues 389–417 (LTASACILAGILVVVLPITLIFNKFSHFY). Over 418-477 (RRQKQLESAMRSCDFGDGMKEVPSVNLRDYYAHKVKSLMASLTNMSRSSPSELSLNDSLR) the chain is Cytoplasmic.

It belongs to the potassium channel family. S (TC 1.A.1.2) subfamily. Kv9.2/KCNS2 sub-subfamily. Heterotetramer with KCNB1 and KCNB2. Does not form homomultimers.

The protein localises to the cell membrane. Potassium channel regulatory subunit that modulate the delayed rectifier voltage-gated potassium channel activity of KCNB1 and KCNB2 by altering their kinetics, expression levels, and shifting the half-inactivation potential to more polarized values. While it does not form functional channels on its own, it can form functional heterotetrameric channels with KCNB1 and KCNB2. Each regulatory subunit has unique regulatory properties that can lead to extensive inhibition, significant changes in kinetics, and/or substantial shifts in the voltage dependencies of the inactivation process. In Homo sapiens (Human), this protein is Delayed-rectifier potassium channel regulatory subunit KCNS2.